Reading from the N-terminus, the 75-residue chain is Small ribosomal subunit protein bS18 (75 aa).

This sequence belongs to the bacterial ribosomal protein bS18 family. As to quaternary structure, part of the 30S ribosomal subunit. Forms a tight heterodimer with protein bS6.

In terms of biological role, binds as a heterodimer with protein bS6 to the central domain of the 16S rRNA, where it helps stabilize the platform of the 30S subunit. This Alteromonas mediterranea (strain DSM 17117 / CIP 110805 / LMG 28347 / Deep ecotype) protein is Small ribosomal subunit protein bS18.